Reading from the N-terminus, the 290-residue chain is Small ribosomal subunit biogenesis GTPase RsgA (290 aa).

A CP-type G domain is found at 62–213 (KNSLVRPPIV…IADTPGFSSL (152 aa)). GTP-binding positions include 111-114 (SKLD) and 156-164 (GQTGVGKST). The Zn(2+) site is built by cysteine 237, cysteine 242, histidine 244, and cysteine 250.

This sequence belongs to the TRAFAC class YlqF/YawG GTPase family. RsgA subfamily. As to quaternary structure, monomer. Associates with 30S ribosomal subunit, binds 16S rRNA. It depends on Zn(2+) as a cofactor.

The protein resides in the cytoplasm. Functionally, one of several proteins that assist in the late maturation steps of the functional core of the 30S ribosomal subunit. Helps release RbfA from mature subunits. May play a role in the assembly of ribosomal proteins into the subunit. Circularly permuted GTPase that catalyzes slow GTP hydrolysis, GTPase activity is stimulated by the 30S ribosomal subunit. This Streptococcus agalactiae serotype V (strain ATCC BAA-611 / 2603 V/R) protein is Small ribosomal subunit biogenesis GTPase RsgA.